We begin with the raw amino-acid sequence, 296 residues long: Probable endonuclease 4 (296 aa).

Zn(2+) contacts are provided by histidine 68, histidine 109, glutamate 144, aspartate 178, histidine 181, histidine 213, aspartate 226, histidine 228, and glutamate 258.

This sequence belongs to the AP endonuclease 2 family. The cofactor is Zn(2+).

The catalysed reaction is Endonucleolytic cleavage to 5'-phosphooligonucleotide end-products.. Endonuclease IV plays a role in DNA repair. It cleaves phosphodiester bonds at apurinic or apyrimidinic (AP) sites, generating a 3'-hydroxyl group and a 5'-terminal sugar phosphate. This is Probable endonuclease 4 from Staphylococcus carnosus (strain TM300).